The sequence spans 375 residues: Circadian-associated transcriptional repressor (375 aa).

Residues 1 to 32 (MDSPSSVSSYSSSSLSPSFSTSSVNSDFSFPS) are compositionally biased toward low complexity. 3 disordered regions span residues 1 to 102 (MDSP…LNTQ), 192 to 218 (KSSS…AASP), and 351 to 375 (DREM…DPQP). The span at 33–46 (DNEREGKGTHELRP) shows a compositional bias: basic and acidic residues.

As to quaternary structure, interacts with BMAL1, PER2, CRY2, BHLHE41, HDAC1 NR3C1.

Its subcellular location is the nucleus. It localises to the PML body. In terms of biological role, transcriptional repressor which forms a negative regulatory component of the circadian clock and acts independently of the circadian transcriptional repressors: CRY1, CRY2 and BHLHE41. In a histone deacetylase-dependent manner represses the transcriptional activator activity of the CLOCK-BMAL1 heterodimer. Abrogates the interaction of BMAL1 with the transcriptional coactivator CREBBP and can repress the histone acetyl-transferase activity of the CLOCK-BMAL1 heterodimer, reducing histone acetylation of its target genes. Rhythmically binds the E-box elements (5'-CACGTG-3') on circadian gene promoters and its occupancy shows circadian oscillation antiphasic to BMAL1. Interacts with the glucocorticoid receptor (NR3C1) and contributes to the repressive function in the glucocorticoid response. The protein is Circadian-associated transcriptional repressor (Ciart) of Mus musculus (Mouse).